The following is a 100-amino-acid chain: Small ribosomal subunit protein uS14 (100 aa).

This sequence belongs to the universal ribosomal protein uS14 family. As to quaternary structure, part of the 30S ribosomal subunit. Contacts proteins S3 and S10.

Functionally, binds 16S rRNA, required for the assembly of 30S particles and may also be responsible for determining the conformation of the 16S rRNA at the A site. This chain is Small ribosomal subunit protein uS14, found in Prochlorococcus marinus subsp. pastoris (strain CCMP1986 / NIES-2087 / MED4).